Here is a 515-residue protein sequence, read N- to C-terminus: Maturase K (515 aa).

The protein belongs to the intron maturase 2 family. MatK subfamily.

It is found in the plastid. The protein localises to the chloroplast. Its function is as follows. Usually encoded in the trnK tRNA gene intron. Probably assists in splicing its own and other chloroplast group II introns. This chain is Maturase K, found in Pinus armandii (Chinese white pine).